The sequence spans 372 residues: Probable basic-leucine zipper transcription factor G (372 aa).

Disordered stretches follow at residues 1–20 (MLSVWNLPVEQQPQQQQQQQ) and 176–234 (TTNN…EKFE). Composition is skewed to low complexity over residues 11-20 (QQPQQQQQQQ) and 176-215 (TTNNNNNNNNNNNNNNNNNNSNNNNSNNNNINNNNNKSNT). A compositionally biased stretch (polar residues) spans 223-234 (IRNSNSTFEKFE). Positions 277-340 (ELKRQKRLIK…LILKAEVGQL (64 aa)) constitute a bZIP domain. Residues 279 to 301 (KRQKRLIKNRESAHLSRQRKRER) are basic motif. The interval 305–340 (LEHRVEELSSNSIDINKTLSSLENENLILKAEVGQL) is leucine-zipper.

It belongs to the bZIP family.

It localises to the nucleus. In terms of biological role, probable transcriptional regulator. The sequence is that of Probable basic-leucine zipper transcription factor G (bzpG) from Dictyostelium discoideum (Social amoeba).